The chain runs to 190 residues: Acyl-acyl carrier protein thioesterase ATL3, chloroplastic (190 aa).

The N-terminal 49 residues, M1–G49, are a transit peptide targeting the chloroplast. D66 is an active-site residue.

Belongs to the 4-hydroxybenzoyl-CoA thioesterase family. As to expression, highly expressed in stems and flowers and at lower levels in rosette leaves, cauline leaves and siliques.

Its subcellular location is the plastid. The protein resides in the chloroplast. In terms of biological role, acyl-ACP thioesterase involved in the production of fatty acids and beta-keto fatty acids. Can produce fatty acids of long chain (14:1 and 16:1) and beta-keto fatty acids of medium to long chain (8:0, 10:0, 12:0, 12:1, 14:0 and 16:0) when expressed in a heterologous organism (E.coli). Possesses thioesterase activity for lauroyl-ACP (12:0-ACP) in vitro. May play a role in the generation of long fatty acids in the chloroplast. This chain is Acyl-acyl carrier protein thioesterase ATL3, chloroplastic, found in Arabidopsis thaliana (Mouse-ear cress).